A 145-amino-acid chain; its full sequence is UPF0201 protein SSO1042 (145 aa).

It belongs to the UPF0201 family.

This Saccharolobus solfataricus (strain ATCC 35092 / DSM 1617 / JCM 11322 / P2) (Sulfolobus solfataricus) protein is UPF0201 protein SSO1042.